A 413-amino-acid polypeptide reads, in one-letter code: Alpha-1-antiproteinase (413 aa).

Residues 1 to 24 form the signal peptide; sequence MTPSISWRLLLLAGLCCLVPSYLA. At Ser-33 the chain carries Phosphoserine. N-linked (GlcNAc...) asparagine glycans are attached at residues Asn-64, Asn-101, and Asn-265. The tract at residues 368–387 is RCL; the sequence is ATTIVEAVFMSLPPILHFNH. Position 378 is a phosphoserine (Ser-378).

Belongs to the serpin family. As to quaternary structure, interacts with CELA2A. Interacts with ERGIC3 and LMAN1/ERGIC53. Interacts with PRSS1/Trypsin.

Its subcellular location is the secreted. In terms of biological role, inhibitor of serine proteases. The primary target is elastase, but also has a moderate affinity for plasmin and thrombin. In Mus saxicola (Brown spiny mouse), this protein is Alpha-1-antiproteinase (Serpina1).